Consider the following 178-residue polypeptide: UPF0228 protein MM_0401 (178 aa).

It belongs to the UPF0228 family.

The sequence is that of UPF0228 protein MM_0401 from Methanosarcina mazei (strain ATCC BAA-159 / DSM 3647 / Goe1 / Go1 / JCM 11833 / OCM 88) (Methanosarcina frisia).